The sequence spans 219 residues: Leucyl/phenylalanyl-tRNA--protein transferase (219 aa).

The protein belongs to the L/F-transferase family.

The protein resides in the cytoplasm. The catalysed reaction is N-terminal L-lysyl-[protein] + L-leucyl-tRNA(Leu) = N-terminal L-leucyl-L-lysyl-[protein] + tRNA(Leu) + H(+). It carries out the reaction N-terminal L-arginyl-[protein] + L-leucyl-tRNA(Leu) = N-terminal L-leucyl-L-arginyl-[protein] + tRNA(Leu) + H(+). The enzyme catalyses L-phenylalanyl-tRNA(Phe) + an N-terminal L-alpha-aminoacyl-[protein] = an N-terminal L-phenylalanyl-L-alpha-aminoacyl-[protein] + tRNA(Phe). Its function is as follows. Functions in the N-end rule pathway of protein degradation where it conjugates Leu, Phe and, less efficiently, Met from aminoacyl-tRNAs to the N-termini of proteins containing an N-terminal arginine or lysine. The protein is Leucyl/phenylalanyl-tRNA--protein transferase of Leptospira borgpetersenii serovar Hardjo-bovis (strain JB197).